The primary structure comprises 289 residues: D-alanine aminotransferase (289 aa).

Tyr-31 is a binding site for substrate. Arg-50 is a binding site for pyridoxal 5'-phosphate. 2 residues coordinate substrate: Arg-99 and His-101. Lys-147 acts as the Proton acceptor in catalysis. Lys-147 is subject to N6-(pyridoxal phosphate)lysine. Position 179 (Glu-179) interacts with pyridoxal 5'-phosphate.

The protein belongs to the class-IV pyridoxal-phosphate-dependent aminotransferase family. As to quaternary structure, homodimer. Pyridoxal 5'-phosphate serves as cofactor.

The enzyme catalyses D-alanine + 2-oxoglutarate = D-glutamate + pyruvate. Functionally, acts on the D-isomers of alanine, leucine, aspartate, glutamate, aminobutyrate, norvaline and asparagine. The enzyme transfers an amino group from a substrate D-amino acid to the pyridoxal phosphate cofactor to form pyridoxamine and an alpha-keto acid in the first half-reaction. The second half-reaction is the reverse of the first, transferring the amino group from the pyridoxamine to a second alpha-keto acid to form the product D-amino acid via a ping-pong mechanism. This is an important process in the formation of D-alanine and D-glutamate, which are essential bacterial cell wall components. This chain is D-alanine aminotransferase (dat), found in Listeria monocytogenes serotype 4b (strain F2365).